A 583-amino-acid chain; its full sequence is Kelch-like protein 38 (583 aa).

The BTB domain maps to 34–101 (TDVILCTEDK…IYTGSITITM (68 aa)). A BACK domain is found at 136 to 237 (CLSMIRLSEI…HPTYLFQFIA (102 aa)). 6 Kelch repeats span residues 285 to 332 (TLVV…CIHS), 333 to 385 (ILYV…SYLH), 386 to 433 (FIFA…ANDQ), 435 to 481 (IYVF…VIED), 482 to 523 (KIYI…VINN), and 525 to 575 (LYVT…PLIC).

This chain is Kelch-like protein 38 (klhl38), found in Danio rerio (Zebrafish).